The chain runs to 196 residues: Molybdenum cofactor guanylyltransferase (196 aa).

GTP contacts are provided by residues 10-12 (LAG), lysine 23, asparagine 51, aspartate 69, and aspartate 99. Aspartate 99 is a binding site for Mg(2+).

The protein belongs to the MobA family. Monomer. The cofactor is Mg(2+).

The protein resides in the cytoplasm. It carries out the reaction Mo-molybdopterin + GTP + H(+) = Mo-molybdopterin guanine dinucleotide + diphosphate. Transfers a GMP moiety from GTP to Mo-molybdopterin (Mo-MPT) cofactor (Moco or molybdenum cofactor) to form Mo-molybdopterin guanine dinucleotide (Mo-MGD) cofactor. This Shewanella loihica (strain ATCC BAA-1088 / PV-4) protein is Molybdenum cofactor guanylyltransferase.